The sequence spans 227 residues: Phosphoribosylformylglycinamidine synthase subunit PurQ (227 aa).

A Glutamine amidotransferase type-1 domain is found at 3–227 (FAVCVFPGSN…LMLWYSLLSD (225 aa)). Cysteine 86 functions as the Nucleophile in the catalytic mechanism. Active-site residues include histidine 203 and glutamate 205.

In terms of assembly, part of the FGAM synthase complex composed of 1 PurL, 1 PurQ and 2 PurS subunits.

The protein resides in the cytoplasm. The catalysed reaction is N(2)-formyl-N(1)-(5-phospho-beta-D-ribosyl)glycinamide + L-glutamine + ATP + H2O = 2-formamido-N(1)-(5-O-phospho-beta-D-ribosyl)acetamidine + L-glutamate + ADP + phosphate + H(+). It carries out the reaction L-glutamine + H2O = L-glutamate + NH4(+). It participates in purine metabolism; IMP biosynthesis via de novo pathway; 5-amino-1-(5-phospho-D-ribosyl)imidazole from N(2)-formyl-N(1)-(5-phospho-D-ribosyl)glycinamide: step 1/2. Functionally, part of the phosphoribosylformylglycinamidine synthase complex involved in the purines biosynthetic pathway. Catalyzes the ATP-dependent conversion of formylglycinamide ribonucleotide (FGAR) and glutamine to yield formylglycinamidine ribonucleotide (FGAM) and glutamate. The FGAM synthase complex is composed of three subunits. PurQ produces an ammonia molecule by converting glutamine to glutamate. PurL transfers the ammonia molecule to FGAR to form FGAM in an ATP-dependent manner. PurS interacts with PurQ and PurL and is thought to assist in the transfer of the ammonia molecule from PurQ to PurL. The polypeptide is Phosphoribosylformylglycinamidine synthase subunit PurQ (Aquifex aeolicus (strain VF5)).